Consider the following 661-residue polypeptide: MSDQFTSIQWDRTEPEGDVPGDSNDHSQVQINSSINLIEEDQGQEQEQDDLVTTNTVVRGGNDSDSNPNEQIPPRDVYIRSKVSQPLKESDGQNFYISYLIETETNEPGLAKTKLKVRRRFSDSNFLYNCLANDFPTSIIPPLPNKQRLEYIKGDRFGEYFTTKRSIALNNFLNRISKHPLLKQAKIYHIFLEDSVNWNTFKQNLKISSNPNSTVGGGSTTSANANGELDSFSDYIMNAFKKPTYESENAKEFQEITDKSNKLQENINKIDKIYQRVVKRQSEISEDFRLFGDEFKKLNQILTEGSDTQFDKELSQQFTSFSENIYQISYDSFKLTRQVDLHYLTSLKDLDHYISQIKNMIKFKDSKLLDYEMLQNYLNKAIAEKNHLMNGNNVSGSDGAMNFISKKIGSLRGKTPGQTYSSGNETNDRINKLNEKIEFLEREVKETFELFHTFEKNLITEYQLFDRIKNDEITTNLHELSQYYLDYYNSVVNHWNDVEIPHSEHLTDELHVLQQSQLRKNLENISIDPKLDVNSKLFEHDDVRLNNDHIRSDLRSIKSQERKNEQVHKQDQEQGEEQEHEQDQVQNQEQEQEPEELSREEAEVLETPVQAQEQEQQEPEELHASQTESHTQSEPQNDNQHNFDDDGSDEGLVDVEGLEQW.

2 stretches are compositionally biased toward polar residues: residues 1-10 (MSDQFTSIQW) and 26-36 (HSQVQINSSIN). Disordered regions lie at residues 1–49 (MSDQ…QEQD) and 56–75 (TVVR…IPPR). Positions 38–49 (IEEDQGQEQEQD) are enriched in acidic residues. Over residues 56-70 (TVVRGGNDSDSNPNE) the composition is skewed to polar residues. Residues 77–198 (VYIRSKVSQP…HIFLEDSVNW (122 aa)) enclose the PX domain. A 1,2-diacyl-sn-glycero-3-phospho-(1D-myo-inositol-3-phosphate) contacts are provided by arginine 120, serine 122, lysine 146, and arginine 165. Basic and acidic residues predominate over residues 554 to 572 (LRSIKSQERKNEQVHKQDQ). The segment at 554-661 (LRSIKSQERK…LVDVEGLEQW (108 aa)) is disordered. Positions 624-640 (ASQTESHTQSEPQNDNQ) are enriched in polar residues. Residues 645–661 (DDGSDEGLVDVEGLEQW) show a composition bias toward acidic residues.

Belongs to the sorting nexin family.

The protein localises to the cytoplasm. Its subcellular location is the membrane. It localises to the vacuole membrane. Sorting nexin involved in the separation or division of vacuoles throughout the entire life cycle of the cells. Required for glucose-induced micropexophagy and ethanol-induced macropexophagy. Involved in the fusion between the pexophagosome and the vacuole. Also involved in the separation or division of vacuoles throughout the entire life cycle of the cells. The chain is Sorting nexin-4 (SNX4) from Komagataella pastoris (Yeast).